A 272-amino-acid chain; its full sequence is Large ribosomal subunit protein uL3 (272 aa).

Residues Q125–S146 are disordered.

It belongs to the universal ribosomal protein uL3 family. Part of the 50S ribosomal subunit. Forms a cluster with proteins L14 and L19.

Its function is as follows. One of the primary rRNA binding proteins, it binds directly near the 3'-end of the 23S rRNA, where it nucleates assembly of the 50S subunit. This Metamycoplasma arthritidis (strain 158L3-1) (Mycoplasma arthritidis) protein is Large ribosomal subunit protein uL3.